A 137-amino-acid polypeptide reads, in one-letter code: Small ribosomal subunit protein uS12 (137 aa).

The disordered stretch occupies residues 1-57 (MPTINQLVRKPRKSKVEKPKSPALNVGYNSHKKVQTNVSSPQKRGVATRVGTMTPRK). At D102 the chain carries 3-methylthioaspartic acid.

This sequence belongs to the universal ribosomal protein uS12 family. Part of the 30S ribosomal subunit. Contacts proteins S8 and S17. May interact with IF1 in the 30S initiation complex.

In terms of biological role, with S4 and S5 plays an important role in translational accuracy. Functionally, interacts with and stabilizes bases of the 16S rRNA that are involved in tRNA selection in the A site and with the mRNA backbone. Located at the interface of the 30S and 50S subunits, it traverses the body of the 30S subunit contacting proteins on the other side and probably holding the rRNA structure together. The combined cluster of proteins S8, S12 and S17 appears to hold together the shoulder and platform of the 30S subunit. In Streptococcus pneumoniae (strain Hungary19A-6), this protein is Small ribosomal subunit protein uS12.